Reading from the N-terminus, the 173-residue chain is Photosystem I assembly protein Ycf3 (173 aa).

3 TPR repeats span residues 35–68 (AFVY…EEDP), 72–105 (SYIL…NPRM), and 120–153 (GEKA…APNN).

This sequence belongs to the Ycf3 family.

It localises to the cellular thylakoid membrane. In terms of biological role, essential for the assembly of the photosystem I (PSI) complex. May act as a chaperone-like factor to guide the assembly of the PSI subunits. The polypeptide is Photosystem I assembly protein Ycf3 (Rippkaea orientalis (strain PCC 8801 / RF-1) (Cyanothece sp. (strain PCC 8801))).